A 542-amino-acid polypeptide reads, in one-letter code: Hydroxylamine reductase (542 aa).

[4Fe-4S] cluster is bound by residues Cys-3, Cys-6, Cys-15, and Cys-21. Positions 238, 262, 307, 398, 426, 451, 485, and 487 each coordinate hybrid [4Fe-2O-2S] cluster. At Cys-398 the chain carries Cysteine persulfide.

The protein belongs to the HCP family. Requires [4Fe-4S] cluster as cofactor. Hybrid [4Fe-2O-2S] cluster is required as a cofactor.

It is found in the cytoplasm. The catalysed reaction is A + NH4(+) + H2O = hydroxylamine + AH2 + H(+). Its function is as follows. Catalyzes the reduction of hydroxylamine to form NH(3) and H(2)O. In Microcystis aeruginosa (strain NIES-843 / IAM M-2473), this protein is Hydroxylamine reductase.